The following is a 368-amino-acid chain: MTVKLTIDCMGGDHGPSVTVPAAVKFVRAHPDAHLMLVGIESAIRAQLKKLKALDDPALSIVPATEVVAMDDPVEVALRKKKDSSMRVALNHVKDGEAQACISAGNTGALMAVSRYVLKTLPGIERPAIAFSLPNPTGYTMMLDLGANVDCEPQHLLQFAEMGHALVAALEGKDRPTIGLLNIGEEVIKGNETIKRAGELLRASTLNFRGNVEGNDIYKGTVDVIVCDGFVGNVALKTSEGLAQMLSDIIREEFGRSLLSKLMALLALPVLMRFKKRVDHRQYNGAALLGLKSLVIKSHGSADAYAFEWAIKRGYDAVKNGVLERLTRAMADNSVSLGDGEHDAGGAGPASPAAGHHAEPSAAQSSKA.

The disordered stretch occupies residues 335-368 (VSLGDGEHDAGGAGPASPAAGHHAEPSAAQSSKA). A compositionally biased stretch (low complexity) spans 349-368 (PASPAAGHHAEPSAAQSSKA).

This sequence belongs to the PlsX family. In terms of assembly, homodimer. Probably interacts with PlsY.

It localises to the cytoplasm. It carries out the reaction a fatty acyl-[ACP] + phosphate = an acyl phosphate + holo-[ACP]. The protein operates within lipid metabolism; phospholipid metabolism. Functionally, catalyzes the reversible formation of acyl-phosphate (acyl-PO(4)) from acyl-[acyl-carrier-protein] (acyl-ACP). This enzyme utilizes acyl-ACP as fatty acyl donor, but not acyl-CoA. The polypeptide is Phosphate acyltransferase (Burkholderia multivorans (strain ATCC 17616 / 249)).